We begin with the raw amino-acid sequence, 553 residues long: Methyl-coenzyme M reductase II subunit alpha (553 aa).

Glutamine 150 serves as a coordination point for coenzyme F430. Residues arginine 228, 259–260, and arginine 273 contribute to the coenzyme B site; that span reads KH. Histidine 260 is subject to Pros-methylhistidine. Residue arginine 274 is modified to 5-methylarginine. Tyrosine 335 is a binding site for coenzyme M. 2-methylglutamine is present on glutamine 402. Tyrosine 446 lines the coenzyme M pocket. A 1-thioglycine modification is found at glycine 447. Aspartate 452 bears the (Z)-2,3-didehydroaspartate mark. Cysteine 454 is modified (S-methylcysteine).

The protein belongs to the methyl-coenzyme M reductase alpha subunit family. In terms of assembly, MCR is a hexamer of two alpha, two beta, and two gamma chains, forming a dimer of heterotrimers. Coenzyme F430 is required as a cofactor. Post-translationally, the alpha subunit contains six modified amino acids near the active site region. Is methylated on His-260, Arg-274, Gln-402 and Cys-454, probably by the action of specific S-adenosylmethionine-dependent methyltransferases. Also contains a thioglycine at position 447, forming a thiopeptide bond. Contains a didehydroaspartate residue at position 452. The methylation on C5 of Arg-274 is a post-translational methylation not essential in vivo, but which plays a role for the stability and structural integrity of MCR.

It catalyses the reaction coenzyme B + methyl-coenzyme M = methane + coenzyme M-coenzyme B heterodisulfide. The protein operates within one-carbon metabolism; methyl-coenzyme M reduction; methane from methyl-coenzyme M: step 1/1. Its function is as follows. Component of the methyl-coenzyme M reductase (MCR) I that catalyzes the reductive cleavage of methyl-coenzyme M (CoM-S-CH3 or 2-(methylthio)ethanesulfonate) using coenzyme B (CoB or 7-mercaptoheptanoylthreonine phosphate) as reductant which results in the production of methane and the mixed heterodisulfide of CoB and CoM (CoM-S-S-CoB). This is the final step in methanogenesis. The sequence is that of Methyl-coenzyme M reductase II subunit alpha (mrtA) from Methanothermobacter marburgensis (strain ATCC BAA-927 / DSM 2133 / JCM 14651 / NBRC 100331 / OCM 82 / Marburg) (Methanobacterium thermoautotrophicum).